Here is a 2528-residue protein sequence, read N- to C-terminus: Reducing polyketide synthase PKS1 (2528 aa).

In terms of domain architecture, Ketosynthase family 3 (KS3) spans 11–436 (ITPIAVVGMS…GANVHAILES (426 aa)). Catalysis depends on for beta-ketoacyl synthase activity residues Cys-186, His-321, and His-359. The segment at 573 to 868 (FVFTGQGAQW…LGGPISQVID (296 aa)) is malonyl-CoA:ACP transacylase (MAT). Residues 954-1092 (LDLIGVFDVH…GLISVLKSSK (139 aa)) form an N-terminal hotdog fold region. Residues 954-1278 (LDLIGVFDVH…LVALDRPNSS (325 aa)) enclose the PKS/mFAS DH domain. Residues 956-1277 (LIGVFDVHSS…TLVALDRPNS (322 aa)) form a dehydratase (DH) domain region. The active-site Proton acceptor; for dehydratase activity is the His-986. Positions 1122 to 1278 (KTEWDVKDMY…LVALDRPNSS (157 aa)) are C-terminal hotdog fold. Catalysis depends on Asp-1187, which acts as the Proton donor; for dehydratase activity. Residues 1827-2139 (GLLDSLHFTV…TGRHMGKMVA (313 aa)) form an enoyl reductase (ER) domain region. The tract at residues 2164–2341 (ASYLLVGGVG…ATVIDIGAVH (178 aa)) is ketoreductase (KR) domain. The region spanning 2442–2519 (SAVTIVLSAL…ALAVKIAARS (78 aa)) is the Carrier domain. Ser-2479 is subject to O-(pantetheine 4'-phosphoryl)serine.

It participates in mycotoxin biosynthesis. Reducing polyketide synthase (PKS); part of the Tox1A locus, one of the 2 loci that mediate the biosynthesis of T-toxin, a family of linear polyketides 37 to 45 carbons in length, of which the major component is 41 carbons, and which leads to high virulence to maize. One of the PKSs (PKS1 or PKS2) could synthesize a precursor, used subsequently by the other PKS as starter unit, to add additional carbons. Variability in the length of the final carbon backbone C35-47 could be achieved by varying the number of condensation cycles, or use of different starter or extender units or might be due to decarboxylation of the penultimate product, catalyzed by DEC1. Additional proteins are required for the biosynthesis of T-toxin, including oxidoreductases RED1, RED2, RED3, LAM1 and OXI1, as well as esterase TOX9. In Cochliobolus heterostrophus (strain C4 / ATCC 48331 / race T) (Southern corn leaf blight fungus), this protein is Reducing polyketide synthase PKS1.